A 432-amino-acid polypeptide reads, in one-letter code: Repulsive guidance molecule A (432 aa).

The N-terminal stretch at 1–29 (MGRGAGSTALGLFQILPVFLCIFPPVTSP) is a signal peptide. A propeptide spans 30–149 (CKILKCNSEF…NYTHCGLFGD (120 aa)) (removed in mature form). N-linked (GlcNAc...) asparagine glycosylation is present at asparagine 96. Residues 99–122 (KDGPTSQPRLRTLPPGDSQERSDS) are disordered. Intrachain disulfides connect cysteine 126–cysteine 207 and cysteine 144–cysteine 296. An N-linked (GlcNAc...) asparagine glycan is attached at asparagine 140. A lipid anchor (GPI-anchor amidated asparagine) is attached at asparagine 404. Residues 405 to 432 (AAPSEHPWALPALWVALLSLSQCWLGLL) constitute a propeptide, removed in mature form.

The protein belongs to the repulsive guidance molecule (RGM) family. Post-translationally, autocatalytically cleaved at low pH; the two chains remain linked via two disulfide bonds.

The protein resides in the cell membrane. Functionally, acts as an axon-specific repulsive guidance molecule in the retinotectal system. Repulsive for a subset of axons of the temporal half of the retina. Provides thus positional information for the temporal axons invading the optic tectum in the stratum opticum. This Gallus gallus (Chicken) protein is Repulsive guidance molecule A (RGMA).